Consider the following 521-residue polypeptide: Probable cytochrome P450 12d1 distal, mitochondrial (521 aa).

A mitochondrion-targeting transit peptide spans 1-19 (MNTLSSARSVAIYVGPVRS). Cysteine 467 is a heme binding site.

Belongs to the cytochrome P450 family. Heme is required as a cofactor.

It localises to the mitochondrion membrane. The chain is Probable cytochrome P450 12d1 distal, mitochondrial from Drosophila melanogaster (Fruit fly).